A 60-amino-acid chain; its full sequence is Ferredoxin-1 (60 aa).

2 consecutive 4Fe-4S ferredoxin-type domains span residues 2-27 (LYIT…SAGD) and 28-60 (DIYV…IVQG). [4Fe-4S] cluster is bound by residues cysteine 8, cysteine 11, cysteine 14, cysteine 18, cysteine 37, cysteine 40, cysteine 48, and cysteine 52.

It depends on [4Fe-4S] cluster as a cofactor.

Ferredoxins are iron-sulfur proteins that transfer electrons in a wide variety of metabolic reactions. The chain is Ferredoxin-1 from Chlorobium limicola.